The sequence spans 145 residues: 3-hydroxyacyl-[acyl-carrier-protein] dehydratase FabZ (145 aa).

His51 is an active-site residue.

It belongs to the thioester dehydratase family. FabZ subfamily.

The protein localises to the cytoplasm. The catalysed reaction is a (3R)-hydroxyacyl-[ACP] = a (2E)-enoyl-[ACP] + H2O. In terms of biological role, involved in unsaturated fatty acids biosynthesis. Catalyzes the dehydration of short chain beta-hydroxyacyl-ACPs and long chain saturated and unsaturated beta-hydroxyacyl-ACPs. This is 3-hydroxyacyl-[acyl-carrier-protein] dehydratase FabZ from Staphylococcus carnosus (strain TM300).